A 175-amino-acid chain; its full sequence is Interleukin-10 (175 aa).

The N-terminal stretch at 1–21 is a signal peptide; it reads MQTCCQALLLLLAACTLPAHC. Intrachain disulfides connect Cys-26-Cys-123 and Cys-77-Cys-129.

It belongs to the IL-10 family. In terms of assembly, homodimer. Interacts with IL10RA and IL10RB. In terms of tissue distribution, expressed predominantly in bursa of Fabricius and cecal tonsils with low levels in thymus, liver and lung.

It is found in the secreted. Functionally, major immune regulatory cytokine that acts on many cells of the immune system where it has profound anti-inflammatory functions, limiting excessive tissue disruption caused by inflammation. Mechanistically, IL10 binds to its heterotetrameric receptor comprising IL10RA and IL10RB leading to JAK1 and STAT2-mediated phosphorylation of STAT3. In turn, STAT3 translocates to the nucleus where it drives expression of anti-inflammatory mediators. Targets antigen-presenting cells (APCs) such as macrophages and monocytes and inhibits their release of pro-inflammatory cytokines including granulocyte-macrophage colony-stimulating factor /GM-CSF, granulocyte colony-stimulating factor/G-CSF, IL-1 alpha, IL-1 beta, IL-6, IL-8 and TNF-alpha. Also interferes with antigen presentation by reducing the expression of MHC-class II and co-stimulatory molecules, thereby inhibiting their ability to induce T cell activation. In addition, controls the inflammatory response of macrophages by reprogramming essential metabolic pathways including mTOR signaling. The polypeptide is Interleukin-10 (Gallus gallus (Chicken)).